Consider the following 326-residue polypeptide: Biotin synthase (326 aa).

The Radical SAM core domain maps to 50 to 279; sequence FNGEKVDVEQ…ESVIKISGGR (230 aa). Residues C68, C72, and C75 each contribute to the [4Fe-4S] cluster site. [2Fe-2S] cluster-binding residues include C112, C145, C204, and K274.

The protein belongs to the radical SAM superfamily. Biotin synthase family. Homodimer. Requires [4Fe-4S] cluster as cofactor. It depends on [2Fe-2S] cluster as a cofactor.

The enzyme catalyses (4R,5S)-dethiobiotin + (sulfur carrier)-SH + 2 reduced [2Fe-2S]-[ferredoxin] + 2 S-adenosyl-L-methionine = (sulfur carrier)-H + biotin + 2 5'-deoxyadenosine + 2 L-methionine + 2 oxidized [2Fe-2S]-[ferredoxin]. It functions in the pathway cofactor biosynthesis; biotin biosynthesis; biotin from 7,8-diaminononanoate: step 2/2. Functionally, catalyzes the conversion of dethiobiotin (DTB) to biotin by the insertion of a sulfur atom into dethiobiotin via a radical-based mechanism. The sequence is that of Biotin synthase from Nitrosopumilus maritimus (strain SCM1).